Here is a 195-residue protein sequence, read N- to C-terminus: Probable nicotinate-nucleotide adenylyltransferase (195 aa).

Belongs to the NadD family.

It carries out the reaction nicotinate beta-D-ribonucleotide + ATP + H(+) = deamido-NAD(+) + diphosphate. Its pathway is cofactor biosynthesis; NAD(+) biosynthesis; deamido-NAD(+) from nicotinate D-ribonucleotide: step 1/1. Functionally, catalyzes the reversible adenylation of nicotinate mononucleotide (NaMN) to nicotinic acid adenine dinucleotide (NaAD). This Bordetella petrii (strain ATCC BAA-461 / DSM 12804 / CCUG 43448) protein is Probable nicotinate-nucleotide adenylyltransferase.